A 148-amino-acid polypeptide reads, in one-letter code: MFIKVMFGAGCSVLVNTSCRLVNLTAHLRQKAGLPPDATIALLAEDGNLVSLEEDLKEGASRAQTMGNSLLKERAIYVLVRIIKGEDMASTRYESLLENLDDHYPELAEELRRLSGLSSVGHNWRKRMGTRRGRHEQSPTSRPRKGPD.

Positions 122–148 (HNWRKRMGTRRGRHEQSPTSRPRKGPD) are disordered. Over residues 123 to 134 (NWRKRMGTRRGR) the composition is skewed to basic residues.

This is an uncharacterized protein from Homo sapiens (Human).